The sequence spans 233 residues: Large ribosomal subunit protein uL1 (233 aa).

It belongs to the universal ribosomal protein uL1 family. In terms of assembly, part of the 50S ribosomal subunit.

Its function is as follows. Binds directly to 23S rRNA. The L1 stalk is quite mobile in the ribosome, and is involved in E site tRNA release. In terms of biological role, protein L1 is also a translational repressor protein, it controls the translation of the L11 operon by binding to its mRNA. The sequence is that of Large ribosomal subunit protein uL1 from Paracoccus denitrificans (strain Pd 1222).